Consider the following 468-residue polypeptide: Argininosuccinate lyase (468 aa).

It belongs to the lyase 1 family. Argininosuccinate lyase subfamily.

Its subcellular location is the cytoplasm. It catalyses the reaction 2-(N(omega)-L-arginino)succinate = fumarate + L-arginine. Its pathway is amino-acid biosynthesis; L-arginine biosynthesis; L-arginine from L-ornithine and carbamoyl phosphate: step 3/3. The chain is Argininosuccinate lyase from Methanothermobacter thermautotrophicus (strain ATCC 29096 / DSM 1053 / JCM 10044 / NBRC 100330 / Delta H) (Methanobacterium thermoautotrophicum).